Reading from the N-terminus, the 430-residue chain is Enolase (430 aa).

Gln164 is a binding site for (2R)-2-phosphoglycerate. Glu206 functions as the Proton donor in the catalytic mechanism. Positions 243, 286, and 313 each coordinate Mg(2+). 4 residues coordinate (2R)-2-phosphoglycerate: Lys338, Arg367, Ser368, and Lys389. The active-site Proton acceptor is Lys338.

This sequence belongs to the enolase family. Component of the RNA degradosome, a multiprotein complex involved in RNA processing and mRNA degradation. The cofactor is Mg(2+).

It localises to the cytoplasm. The protein resides in the secreted. Its subcellular location is the cell surface. It carries out the reaction (2R)-2-phosphoglycerate = phosphoenolpyruvate + H2O. It participates in carbohydrate degradation; glycolysis; pyruvate from D-glyceraldehyde 3-phosphate: step 4/5. Functionally, catalyzes the reversible conversion of 2-phosphoglycerate (2-PG) into phosphoenolpyruvate (PEP). It is essential for the degradation of carbohydrates via glycolysis. The sequence is that of Enolase from Dichelobacter nodosus (strain VCS1703A).